A 148-amino-acid polypeptide reads, in one-letter code: uncharacterized protein (148 aa).

Positions 65 to 79 are enriched in low complexity; it reads VDSTPSVDSTGSTSD. Residues 65 to 85 are disordered; the sequence is VDSTPSVDSTGSTSDVVDDRG.

This is an uncharacterized protein from Saccharomyces cerevisiae (strain ATCC 204508 / S288c) (Baker's yeast).